The following is a 443-amino-acid chain: Enolase (443 aa).

Q167 contacts (2R)-2-phosphoglycerate. E209 functions as the Proton donor in the catalytic mechanism. Mg(2+) is bound by residues D246, E291, and D318. (2R)-2-phosphoglycerate contacts are provided by K343, R372, S373, and K394. K343 acts as the Proton acceptor in catalysis.

The protein belongs to the enolase family. As to quaternary structure, component of the RNA degradosome, a multiprotein complex involved in RNA processing and mRNA degradation. Mg(2+) is required as a cofactor.

It is found in the cytoplasm. The protein localises to the secreted. Its subcellular location is the cell surface. It catalyses the reaction (2R)-2-phosphoglycerate = phosphoenolpyruvate + H2O. It participates in carbohydrate degradation; glycolysis; pyruvate from D-glyceraldehyde 3-phosphate: step 4/5. In terms of biological role, catalyzes the reversible conversion of 2-phosphoglycerate (2-PG) into phosphoenolpyruvate (PEP). It is essential for the degradation of carbohydrates via glycolysis. This Wigglesworthia glossinidia brevipalpis protein is Enolase.